The chain runs to 375 residues: Citrate synthase (375 aa).

Catalysis depends on residues histidine 266 and aspartate 317.

It belongs to the citrate synthase family. In terms of assembly, homohexamer.

It catalyses the reaction oxaloacetate + acetyl-CoA + H2O = citrate + CoA + H(+). The protein operates within carbohydrate metabolism; tricarboxylic acid cycle; isocitrate from oxaloacetate: step 1/2. Its activity is regulated as follows. Allosterically inhibited by NADH. The chain is Citrate synthase (gltA) from Mycolicibacterium smegmatis (Mycobacterium smegmatis).